The chain runs to 314 residues: Acetyl-coenzyme A carboxylase carboxyl transferase subunit beta (314 aa).

One can recognise a CoA carboxyltransferase N-terminal domain in the interval 37–307 (LWQKCPACDA…MSLPALEPTY (271 aa)). Residues Cys-41, Cys-44, Cys-60, and Cys-63 each contribute to the Zn(2+) site. The segment at 41 to 63 (CPACDALTYTKDLQQNWQVCPSC) adopts a C4-type zinc-finger fold.

This sequence belongs to the AccD/PCCB family. In terms of assembly, acetyl-CoA carboxylase is a heterohexamer composed of biotin carboxyl carrier protein (AccB), biotin carboxylase (AccC) and two subunits each of ACCase subunit alpha (AccA) and ACCase subunit beta (AccD). Requires Zn(2+) as cofactor.

The protein resides in the cytoplasm. It carries out the reaction N(6)-carboxybiotinyl-L-lysyl-[protein] + acetyl-CoA = N(6)-biotinyl-L-lysyl-[protein] + malonyl-CoA. The protein operates within lipid metabolism; malonyl-CoA biosynthesis; malonyl-CoA from acetyl-CoA: step 1/1. Functionally, component of the acetyl coenzyme A carboxylase (ACC) complex. Biotin carboxylase (BC) catalyzes the carboxylation of biotin on its carrier protein (BCCP) and then the CO(2) group is transferred by the transcarboxylase to acetyl-CoA to form malonyl-CoA. This is Acetyl-coenzyme A carboxylase carboxyl transferase subunit beta from Synechococcus sp. (strain JA-3-3Ab) (Cyanobacteria bacterium Yellowstone A-Prime).